We begin with the raw amino-acid sequence, 122 residues long: LYR motif-containing protein 1 (122 aa).

The protein belongs to the complex I LYR family. As to expression, high levels in adipose tissue.

The protein resides in the nucleus. In terms of biological role, may promote cell proliferation and inhibition of apoptosis of preadipocytes. This chain is LYR motif-containing protein 1 (LYRM1), found in Homo sapiens (Human).